A 230-amino-acid polypeptide reads, in one-letter code: Alpha-S1-casein (230 aa).

The N-terminal stretch at 1–15 (MKLLILTCLVAVALA) is a signal peptide. A phosphoserine mark is found at serine 33, serine 83, serine 85, serine 86, serine 87, and serine 88. Over residues 60–83 (DELKDTRNEPTEDHIMEDTERKES) the composition is skewed to basic and acidic residues. Disordered stretches follow at residues 60–103 (DELK…DILK) and 211–230 (TPEGIASEDGGKTDVMPQWW). The span at 84 to 96 (GSSSSEEVVSSTT) shows a compositional bias: low complexity.

This sequence belongs to the alpha-casein family. As to expression, mammary gland specific. Secreted in milk.

The protein resides in the secreted. Its function is as follows. Important role in the capacity of milk to transport calcium phosphate. The chain is Alpha-S1-casein (CSN1S1) from Camelus dromedarius (Dromedary).